The primary structure comprises 558 residues: Cyclomaltodextrinase (558 aa).

The Ca(2+) site is built by N143, G168, and D170. Residues H243 and R323 each coordinate substrate. The active-site Nucleophile is the D325. E354 functions as the Proton donor in the catalytic mechanism. Residues 420–421 (HD), D465, and R469 each bind substrate.

Belongs to the glycosyl hydrolase 13 family. As to quaternary structure, monomer. Depending on the pH of the solution, exists as a monomer, a homodimer or as an assembly of six homodimers forming a dodecamer, which is catalytically the most efficient form of the enzyme. It depends on Ca(2+) as a cofactor.

The catalysed reaction is cyclomaltodextrin + H2O = linear maltodextrin. The enzyme catalyses Hydrolysis of pullulan to panose (6-alpha-D-glucosylmaltose).. With respect to regulation, hydrolysis of beta-cyclodextrin is inhibited by Cu(2+), Zn(2+) and Ag(+), and activated by Ca(2+), EGTA and EDTA. Activity is increased over twofold in the presence of 5 mM EDTA. Competitively inhibited by acarbose and methyl 6-amino-6-deoxy-alpha-D-glucopyranoside by reducing the rate of the ring opening step of the reaction. Hydrolyzes alpha-, beta- and gamma-cyclodextrins and the resulting linear maltodextrins, with the highest activity with beta-cyclodextrin (cyclomaltoheptaose). Soluble starch is hydrolyzed slowly, but it is nevertheless preferred over pullulan as a substrate. Is able to hydrolyze amylose and amylopectin, with a very strong preference for amylose, with maltose and glucose as the main products. Maltose and glucose are the main hydrolysis products of cyclomaltodextrins, maltodextrins and starch, whereas panose is the main hydrolysis product of pullulan. Acarbose is partially hydrolyzed to glucose and pseudotrisaccharide. No activity with maltose as substrate. Has transglycosylating activity with high concentrations of maltotriose, maltotetraose and starch. In Bacillus sp, this protein is Cyclomaltodextrinase.